Consider the following 68-residue polypeptide: Large ribosomal subunit protein uL29 (68 aa).

Belongs to the universal ribosomal protein uL29 family.

The chain is Large ribosomal subunit protein uL29 from Maricaulis maris (strain MCS10) (Caulobacter maris).